The primary structure comprises 556 residues: MERVWFAKLTNKGTIKIGYISFILLSLLCQSLIGLVNADFNYEGCYSAADIQSAGLSLKNSYIYQSVSYCQNQCPESAVVALFNGSDCYCGNSVSFLTSLTKSTDSNCGTKCSGWPYQMCGGSSYMNVYVNAETFVSSVESSSSKEGSSTSYMPSTTSSLSSAQISSTTRRTSTDMKSSEMIATTVSTTSTTSSSTSSTTSSTTSSTTSSTTSSTTSSSTSSTTSSTTSSTTSSTTSSTTSSTTSSTTSSTTSSTTSIFSVTSSSSSITLSSSEHTTVDSRTSSPSSTLVPVSSSSSTLSTPKVTSMTPSTSSTIPIVTSVELVTSVVTKAIVSTSDQHQETIFVTRTSVVERSSEVATATAAASNNRSNSTSKQRLSGGAIAGIVIGVVFGVIFIILILLFLIWRRRKSHDQLDLEETKHYQPYSFGDEDANPIGPPPSSGTTNWMRHSRGNTAGSIGTSNMYGFSMSNGANYSSPSSNTSGSIINNLAGLQDATVQKQNLPSTVFEEANTLNSANERFSANSLPDMMMSGPLQVVNPDNPDNPELSSTVSHNRA.

The first 38 residues, 1 to 38 (MERVWFAKLTNKGTIKIGYISFILLSLLCQSLIGLVNA), serve as a signal peptide directing secretion. A WSC domain is found at 39-132 (DFNYEGCYSA…SSYMNVYVNA (94 aa)). Over 39–384 (DFNYEGCYSA…QRLSGGAIAG (346 aa)) the chain is Extracellular. N-linked (GlcNAc...) asparagine glycosylation is present at asparagine 84. 2 stretches are compositionally biased toward low complexity: residues 142-169 (SSSKEGSSTSYMPSTTSSLSSAQISSTT) and 184-257 (TTVS…STTS). 2 disordered regions span residues 142–257 (SSSK…STTS) and 269–312 (TLSS…PSTS). 2 N-linked (GlcNAc...) asparagine glycosylation sites follow: asparagine 367 and asparagine 370. Residues 385–405 (IVIGVVFGVIFIILILLFLIW) traverse the membrane as a helical segment. Topologically, residues 406-556 (RRRKSHDQLD…LSSTVSHNRA (151 aa)) are cytoplasmic. 2 disordered regions span residues 425 to 444 (YSFGDEDANPIGPPPSSGTT) and 534 to 556 (LQVVNPDNPDNPELSSTVSHNRA). Polar residues predominate over residues 546–556 (ELSSTVSHNRA).

It localises to the membrane. The polypeptide is Cell wall integrity and stress response component 3 (WSC3) (Saccharomyces cerevisiae (strain ATCC 204508 / S288c) (Baker's yeast)).